Reading from the N-terminus, the 341-residue chain is DER1-like family member protein 1 (341 aa).

Residues 1–41 (MAGPRNVRTLHGNGGRNNDVMGPKEFWLNIPPITRTLFTLA) are Cytoplasmic-facing. The helical transmembrane segment at 42 to 62 (IVMTIVGRLNLINPWYFIYVW) threads the bilayer. The Lumenal segment spans residues 63-122 (NLTFKKVQIWRLLTSCVMLSSRAMPALMELYSIYDRSSQLERGHFGPGLSNRRGPMVTVD). Residues 123-143 (YAYYLCFCILAITTATTIIYG) form a helical membrane-spanning segment. The Cytoplasmic segment spans residues 144 to 170 (SYYPVVLTSGFISCITYTWSIDNANVQ). Residues 171–191 (IMFYGLIPVWGKYFPLIQLFI) traverse the membrane as a helical segment. Residue S192 is a topological domain, lumenal. The chain crosses the membrane as a helical span at residues 193-213 (FVFNEGDFVISLIGFTTGYLY). Over 214–341 (TCLDTHTLGP…GQTNSPSDSQ (128 aa)) the chain is Cytoplasmic. Composition is skewed to polar residues over residues 276-286 (SSQRETRTFSG) and 296-341 (ATLS…SDSQ). Residues 276-341 (SSQRETRTFS…GQTNSPSDSQ (66 aa)) are disordered.

This sequence belongs to the derlin family.

The protein resides in the endoplasmic reticulum membrane. In terms of biological role, may be involved in the degradation process of some misfolded endoplasmic reticulum (ER) luminal proteins. Its precise role is however unclear and its inability to complement der1 mutations, suggests either that it is not involved in degradation process of misfolded proteins, or that it participates in the destruction of specific misfolded ER luminal proteins. This Saccharomyces cerevisiae (strain ATCC 204508 / S288c) (Baker's yeast) protein is DER1-like family member protein 1 (DFM1).